The primary structure comprises 160 residues: Protein-export protein SecB (160 aa).

The protein belongs to the SecB family. Homotetramer, a dimer of dimers. One homotetramer interacts with 1 SecA dimer.

It is found in the cytoplasm. One of the proteins required for the normal export of preproteins out of the cell cytoplasm. It is a molecular chaperone that binds to a subset of precursor proteins, maintaining them in a translocation-competent state. It also specifically binds to its receptor SecA. In Burkholderia multivorans (strain ATCC 17616 / 249), this protein is Protein-export protein SecB.